The chain runs to 449 residues: Probable pectate lyase P59 (449 aa).

The N-terminal stretch at 1 to 22 (MGGPKIKYSFLFLCITFATIIP) is a signal peptide. Asn-56, Asn-80, and Asn-81 each carry an N-linked (GlcNAc...) asparagine glycan. Ca(2+) contacts are provided by Asp-245, Asp-269, and Asp-273. The active site involves Arg-325.

Belongs to the polysaccharide lyase 1 family. It depends on Ca(2+) as a cofactor. In terms of tissue distribution, expressed in anthers and pollen.

It catalyses the reaction Eliminative cleavage of (1-&gt;4)-alpha-D-galacturonan to give oligosaccharides with 4-deoxy-alpha-D-galact-4-enuronosyl groups at their non-reducing ends.. It participates in glycan metabolism; pectin degradation; 2-dehydro-3-deoxy-D-gluconate from pectin: step 2/5. Functionally, might be needed during pollen development and tube growth. This Solanum lycopersicum (Tomato) protein is Probable pectate lyase P59 (LAT59).